Reading from the N-terminus, the 187-residue chain is ATP synthase subunit b (187 aa).

The chain crosses the membrane as a helical span at residues Asn-32–Gly-52.

The protein belongs to the ATPase B chain family. As to quaternary structure, F-type ATPases have 2 components, F(1) - the catalytic core - and F(0) - the membrane proton channel. F(1) has five subunits: alpha(3), beta(3), gamma(1), delta(1), epsilon(1). F(0) has four main subunits: a(1), b(1), b'(1) and c(10-14). The alpha and beta chains form an alternating ring which encloses part of the gamma chain. F(1) is attached to F(0) by a central stalk formed by the gamma and epsilon chains, while a peripheral stalk is formed by the delta, b and b' chains.

Its subcellular location is the cellular thylakoid membrane. Its function is as follows. F(1)F(0) ATP synthase produces ATP from ADP in the presence of a proton or sodium gradient. F-type ATPases consist of two structural domains, F(1) containing the extramembraneous catalytic core and F(0) containing the membrane proton channel, linked together by a central stalk and a peripheral stalk. During catalysis, ATP synthesis in the catalytic domain of F(1) is coupled via a rotary mechanism of the central stalk subunits to proton translocation. Component of the F(0) channel, it forms part of the peripheral stalk, linking F(1) to F(0). In Trichormus variabilis (strain ATCC 29413 / PCC 7937) (Anabaena variabilis), this protein is ATP synthase subunit b.